Here is a 103-residue protein sequence, read N- to C-terminus: Small ribosomal subunit protein uS10 (103 aa).

This sequence belongs to the universal ribosomal protein uS10 family. In terms of assembly, part of the 30S ribosomal subunit.

In terms of biological role, involved in the binding of tRNA to the ribosomes. The polypeptide is Small ribosomal subunit protein uS10 (Rubrobacter xylanophilus (strain DSM 9941 / JCM 11954 / NBRC 16129 / PRD-1)).